The following is a 139-amino-acid chain: Protein archease (139 aa).

Ca(2+) is bound by residues D12, D138, and I139.

This sequence belongs to the archease family.

Functionally, activates the tRNA-splicing ligase complex by facilitating the enzymatic turnover of catalytic subunit RtcB. Acts by promoting the guanylylation of RtcB, a key intermediate step in tRNA ligation. Can also alter the NTP specificity of RtcB such that ATP, dGTP or ITP is used efficiently. The polypeptide is Protein archease (Sulfolobus acidocaldarius (strain ATCC 33909 / DSM 639 / JCM 8929 / NBRC 15157 / NCIMB 11770)).